The chain runs to 255 residues: 5'-nucleotidase SurE (255 aa).

A divalent metal cation is bound by residues Asp8, Asp9, Ser39, and Asn91.

It belongs to the SurE nucleotidase family. A divalent metal cation serves as cofactor.

Its subcellular location is the cytoplasm. The catalysed reaction is a ribonucleoside 5'-phosphate + H2O = a ribonucleoside + phosphate. In terms of biological role, nucleotidase that shows phosphatase activity on nucleoside 5'-monophosphates. In Acinetobacter baumannii (strain AB0057), this protein is 5'-nucleotidase SurE.